We begin with the raw amino-acid sequence, 933 residues long: Bifunctional uridylyltransferase/uridylyl-removing enzyme (933 aa).

The segment at 1 to 390 (MLSTRAASAD…RLAALARRKD (390 aa)) is uridylyltransferase. The interval 391 to 745 (VDGFVVDGER…TRIDRGRAIT (355 aa)) is uridylyl-removing. The 123-residue stretch at 506–628 (VDEHTLFALG…VQSPERLRLL (123 aa)) folds into the HD domain. ACT domains follow at residues 746–829 (EVTI…DLTK) and 859–933 (VIEV…DPSA).

The protein belongs to the GlnD family. Mg(2+) is required as a cofactor.

It carries out the reaction [protein-PII]-L-tyrosine + UTP = [protein-PII]-uridylyl-L-tyrosine + diphosphate. The enzyme catalyses [protein-PII]-uridylyl-L-tyrosine + H2O = [protein-PII]-L-tyrosine + UMP + H(+). With respect to regulation, uridylyltransferase (UTase) activity is inhibited by glutamine, while glutamine activates uridylyl-removing (UR) activity. Uridylylation process is dependent on ATP and 2-oxoglutarate, which are effector molecules that likely bind to PII proteins and control their activity. Functionally, modifies, by uridylylation and deuridylylation, the PII regulatory proteins GlnB and GlnZ, in response to the nitrogen status of the cell that GlnD senses through the glutamine level. Under low glutamine levels, catalyzes the conversion of the PII proteins and UTP to PII-UMP and PPi, while under higher glutamine levels, GlnD hydrolyzes PII-UMP to PII and UMP (deuridylylation). Thus, controls uridylylation state and activity of the PII proteins, and plays an important role in the regulation of nitrogen fixation and metabolism. The protein is Bifunctional uridylyltransferase/uridylyl-removing enzyme of Azospirillum brasilense.